The chain runs to 634 residues: tRNA uridine 5-carboxymethylaminomethyl modification enzyme MnmG (634 aa).

Residue 14 to 19 participates in FAD binding; it reads GGGHAG. Residue 279-293 coordinates NAD(+); the sequence is GPRYCPSIEDKVVRF.

The protein belongs to the MnmG family. Homodimer. Heterotetramer of two MnmE and two MnmG subunits. FAD is required as a cofactor.

It localises to the cytoplasm. Its function is as follows. NAD-binding protein involved in the addition of a carboxymethylaminomethyl (cmnm) group at the wobble position (U34) of certain tRNAs, forming tRNA-cmnm(5)s(2)U34. In Xanthomonas euvesicatoria pv. vesicatoria (strain 85-10) (Xanthomonas campestris pv. vesicatoria), this protein is tRNA uridine 5-carboxymethylaminomethyl modification enzyme MnmG.